Consider the following 359-residue polypeptide: 3-dehydroquinate synthase (359 aa).

NAD(+) is bound by residues 106 to 110 (GVVGD), 130 to 131 (TS), lysine 143, and lysine 152. Zn(2+) contacts are provided by glutamate 185, histidine 246, and histidine 262.

It belongs to the sugar phosphate cyclases superfamily. Dehydroquinate synthase family. NAD(+) is required as a cofactor. It depends on Co(2+) as a cofactor. Requires Zn(2+) as cofactor.

Its subcellular location is the cytoplasm. It carries out the reaction 7-phospho-2-dehydro-3-deoxy-D-arabino-heptonate = 3-dehydroquinate + phosphate. The protein operates within metabolic intermediate biosynthesis; chorismate biosynthesis; chorismate from D-erythrose 4-phosphate and phosphoenolpyruvate: step 2/7. Its function is as follows. Catalyzes the conversion of 3-deoxy-D-arabino-heptulosonate 7-phosphate (DAHP) to dehydroquinate (DHQ). This is 3-dehydroquinate synthase from Lactiplantibacillus plantarum (strain ATCC BAA-793 / NCIMB 8826 / WCFS1) (Lactobacillus plantarum).